A 252-amino-acid chain; its full sequence is Imidazole glycerol phosphate synthase subunit HisF (252 aa).

Active-site residues include D11 and D130.

This sequence belongs to the HisA/HisF family. Heterodimer of HisH and HisF.

It is found in the cytoplasm. It catalyses the reaction 5-[(5-phospho-1-deoxy-D-ribulos-1-ylimino)methylamino]-1-(5-phospho-beta-D-ribosyl)imidazole-4-carboxamide + L-glutamine = D-erythro-1-(imidazol-4-yl)glycerol 3-phosphate + 5-amino-1-(5-phospho-beta-D-ribosyl)imidazole-4-carboxamide + L-glutamate + H(+). The protein operates within amino-acid biosynthesis; L-histidine biosynthesis; L-histidine from 5-phospho-alpha-D-ribose 1-diphosphate: step 5/9. Its function is as follows. IGPS catalyzes the conversion of PRFAR and glutamine to IGP, AICAR and glutamate. The HisF subunit catalyzes the cyclization activity that produces IGP and AICAR from PRFAR using the ammonia provided by the HisH subunit. This chain is Imidazole glycerol phosphate synthase subunit HisF, found in Bacillus pumilus (strain SAFR-032).